We begin with the raw amino-acid sequence, 339 residues long: D-erythrose-4-phosphate dehydrogenase (339 aa).

NAD(+) contacts are provided by residues 12 to 13 and Arg81; that span reads RI. Residues 154–156, Arg200, 213–214, and Arg236 contribute to the substrate site; these read SCT and TR. The active-site Nucleophile is Cys155. An NAD(+)-binding site is contributed by Asn318.

The protein belongs to the glyceraldehyde-3-phosphate dehydrogenase family. Epd subfamily. In terms of assembly, homotetramer.

It is found in the cytoplasm. It carries out the reaction D-erythrose 4-phosphate + NAD(+) + H2O = 4-phospho-D-erythronate + NADH + 2 H(+). It participates in cofactor biosynthesis; pyridoxine 5'-phosphate biosynthesis; pyridoxine 5'-phosphate from D-erythrose 4-phosphate: step 1/5. Its function is as follows. Catalyzes the NAD-dependent conversion of D-erythrose 4-phosphate to 4-phosphoerythronate. The sequence is that of D-erythrose-4-phosphate dehydrogenase from Cronobacter sakazakii (strain ATCC BAA-894) (Enterobacter sakazakii).